The sequence spans 495 residues: Ectonucleoside triphosphate diphosphohydrolase 2 (495 aa).

The Cytoplasmic portion of the chain corresponds to 1-4; it reads MAGK. The chain crosses the membrane as a helical span at residues 5–25; the sequence is LVSLVPPLLLAAAGLTGLLLL. The Extracellular portion of the chain corresponds to 26 to 462; that stretch reads CVPTQDVREP…PGLRKGTHFS (437 aa). N64 carries an N-linked (GlcNAc...) asparagine glycan. The cysteines at positions 75 and 99 are disulfide-linked. N-linked (GlcNAc...) asparagine glycosylation occurs at N129. E165 serves as the catalytic Proton acceptor. Position 204–208 (204–208) interacts with ATP; sequence GASTQ. Disulfide bonds link C242–C284 and C265–C310. N-linked (GlcNAc...) asparagine glycosylation is found at N294, N306, and N319. 2 cysteine pairs are disulfide-bonded: C323/C328 and C377/C399. 2 N-linked (GlcNAc...) asparagine glycosylation sites follow: N378 and N443. The chain crosses the membrane as a helical span at residues 463-483; the sequence is SWVALLLLFTVLILAALVLLL. Residues 484–495 lie on the Cytoplasmic side of the membrane; sequence RQVRSAKSPGAL.

It belongs to the GDA1/CD39 NTPase family. Ca(2+) serves as cofactor. Requires Mg(2+) as cofactor. As to expression, expressed in brain, heart, vas deferens, kidney, skeletal muscle, thymus, lung and spleen. Weak expression in liver.

The protein resides in the cell membrane. Functionally, in the nervous system, could hydrolyze ATP and other nucleotides to regulate purinergic neurotransmission. Hydrolyzes ADP only to a marginal extent. The polypeptide is Ectonucleoside triphosphate diphosphohydrolase 2 (Entpd2) (Rattus norvegicus (Rat)).